The following is a 245-amino-acid chain: 14-3-3 protein theta (245 aa).

Position 1 is an N-acetylmethionine (Met1). Lys3 carries the N6-acetyllysine modification. Lys49 carries the post-translational modification N6-acetyllysine; alternate. Lys49 participates in a covalent cross-link: Glycyl lysine isopeptide (Lys-Gly) (interchain with G-Cter in SUMO2); alternate. Lys68 is modified (N6-acetyllysine). A 3'-nitrotyrosine modification is found at Tyr82. Ser92 bears the Phosphoserine mark. Tyr104 is subject to 3'-nitrotyrosine. Lys115 carries the N6-acetyllysine modification. At Ser232 the chain carries Phosphoserine; by CK1.

This sequence belongs to the 14-3-3 family. As to quaternary structure, homodimer. Interacts with CDK16. Interacts with RGS7 (phosphorylated form). Interacts with SSH1. Interacts with CDKN1B ('Thr-198' phosphorylated form); the interaction translocates CDKN1B to the cytoplasm. Interacts with GAB2. Interacts with the 'Ser-241' phosphorylated form of PDPK1. Interacts with the 'Thr-369' phosphorylated form of DAPK2. Interacts with PI4KB, TBC1D22A and TBC1D22B. Interacts with SLITRK1. Interacts with RIPOR2. Interacts with INAVA; the interaction increases upon PRR (pattern recognition receptor) stimulation and is required for cellular signaling pathway activation and cytokine secretion. Interacts with MARK2, MARK3 and MARK4. Interacts with MEFV.

The protein localises to the cytoplasm. Functionally, adapter protein implicated in the regulation of a large spectrum of both general and specialized signaling pathways. Binds to a large number of partners, usually by recognition of a phosphoserine or phosphothreonine motif. Binding generally results in the modulation of the activity of the binding partner. Negatively regulates the kinase activity of PDPK1. This Bos taurus (Bovine) protein is 14-3-3 protein theta (YWHAQ).